We begin with the raw amino-acid sequence, 256 residues long: PGL/p-HBAD biosynthesis glycosyltransferase Mb2981 (256 aa).

Belongs to the glycosyltransferase 2 family.

Functionally, involved in glycosylation steps downstream of mono-O-methyl-glycosyl-p-hydroxybenzoic acid derivative (p-HBAD I) and 2-O-methyl-rhamnosyl-phenolphthiocerol dimycocerosate (mycoside B) during the p-hydroxybenzoic acid derivatives (p-HBAD) and glycosylated phenolphthiocerol dimycocerosates (PGL) biosynthesis. The sequence is that of PGL/p-HBAD biosynthesis glycosyltransferase Mb2981 from Mycobacterium bovis (strain ATCC BAA-935 / AF2122/97).